The primary structure comprises 260 residues: Thiazole synthase (260 aa).

Lys100 acts as the Schiff-base intermediate with DXP in catalysis. 1-deoxy-D-xylulose 5-phosphate contacts are provided by residues Gly161, 187–188 (AG), and 209–210 (NT).

The protein belongs to the ThiG family. Homotetramer. Forms heterodimers with either ThiH or ThiS.

Its subcellular location is the cytoplasm. It carries out the reaction [ThiS sulfur-carrier protein]-C-terminal-Gly-aminoethanethioate + 2-iminoacetate + 1-deoxy-D-xylulose 5-phosphate = [ThiS sulfur-carrier protein]-C-terminal Gly-Gly + 2-[(2R,5Z)-2-carboxy-4-methylthiazol-5(2H)-ylidene]ethyl phosphate + 2 H2O + H(+). It functions in the pathway cofactor biosynthesis; thiamine diphosphate biosynthesis. Functionally, catalyzes the rearrangement of 1-deoxy-D-xylulose 5-phosphate (DXP) to produce the thiazole phosphate moiety of thiamine. Sulfur is provided by the thiocarboxylate moiety of the carrier protein ThiS. In vitro, sulfur can be provided by H(2)S. This is Thiazole synthase from Sorangium cellulosum (strain So ce56) (Polyangium cellulosum (strain So ce56)).